Here is a 508-residue protein sequence, read N- to C-terminus: ATP synthase subunit alpha (508 aa).

Residue 169 to 176 (GDRGTGKS) participates in ATP binding.

It belongs to the ATPase alpha/beta chains family. F-type ATPases have 2 components, CF(1) - the catalytic core - and CF(0) - the membrane proton channel. CF(1) has five subunits: alpha(3), beta(3), gamma(1), delta(1), epsilon(1). CF(0) has three main subunits: a(1), b(2) and c(9-12). The alpha and beta chains form an alternating ring which encloses part of the gamma chain. CF(1) is attached to CF(0) by a central stalk formed by the gamma and epsilon chains, while a peripheral stalk is formed by the delta and b chains.

It localises to the cell membrane. It carries out the reaction ATP + H2O + 4 H(+)(in) = ADP + phosphate + 5 H(+)(out). Produces ATP from ADP in the presence of a proton gradient across the membrane. The alpha chain is a regulatory subunit. The chain is ATP synthase subunit alpha from Natranaerobius thermophilus (strain ATCC BAA-1301 / DSM 18059 / JW/NM-WN-LF).